A 420-amino-acid polypeptide reads, in one-letter code: Glucose-1-phosphate adenylyltransferase (420 aa).

Alpha-D-glucose 1-phosphate-binding positions include Tyr107, Gly172, 187-188, and Ser205; that span reads EK.

It belongs to the bacterial/plant glucose-1-phosphate adenylyltransferase family. As to quaternary structure, homotetramer.

The catalysed reaction is alpha-D-glucose 1-phosphate + ATP + H(+) = ADP-alpha-D-glucose + diphosphate. The protein operates within glycan biosynthesis; glycogen biosynthesis. Its function is as follows. Involved in the biosynthesis of ADP-glucose, a building block required for the elongation reactions to produce glycogen. Catalyzes the reaction between ATP and alpha-D-glucose 1-phosphate (G1P) to produce pyrophosphate and ADP-Glc. This chain is Glucose-1-phosphate adenylyltransferase, found in Rhodopseudomonas palustris (strain ATCC BAA-98 / CGA009).